A 270-amino-acid chain; its full sequence is NAD kinase (270 aa).

Catalysis depends on aspartate 45, which acts as the Proton acceptor. Residues 45–46 (DG), 121–122 (NE), lysine 147, aspartate 149, 160–165 (TAYSKS), and alanine 184 each bind NAD(+).

This sequence belongs to the NAD kinase family. A divalent metal cation serves as cofactor.

The protein resides in the cytoplasm. It carries out the reaction NAD(+) + ATP = ADP + NADP(+) + H(+). Involved in the regulation of the intracellular balance of NAD and NADP, and is a key enzyme in the biosynthesis of NADP. Catalyzes specifically the phosphorylation on 2'-hydroxyl of the adenosine moiety of NAD to yield NADP. In Lactobacillus johnsonii (strain CNCM I-12250 / La1 / NCC 533), this protein is NAD kinase.